Reading from the N-terminus, the 254-residue chain is Ciliary microtubule associated protein 1A (254 aa).

2 STPGR repeats span residues 180 to 205 and 216 to 241; these read PGPAAYRQTDVRVTKFKAPQYTMAAR and PGPGAHSPEKVTLTKPCAPVVTFGIK. Residues 207–226 are disordered; sequence EPPGDKTLKPGPGAHSPEKV.

Belongs to the CIMAP family. Microtubule inner protein component of sperm flagellar doublet microtubules. Testis-specific.

It localises to the cytoplasm. It is found in the cytoskeleton. Its subcellular location is the flagellum axoneme. Outer dense fibers are filamentous structures located on the outside of the axoneme in the midpiece and principal piece of the mammalian sperm tail. May help to maintain the passive elastic structures and elastic recoil of the sperm tail. The chain is Ciliary microtubule associated protein 1A from Homo sapiens (Human).